A 156-amino-acid chain; its full sequence is RNA pyrophosphohydrolase (156 aa).

Residues 6-148 (NYRPNVAAIV…KKNIYVRVIK (143 aa)) enclose the Nudix hydrolase domain. The Nudix box signature appears at 43-64 (GGIDKGESVKNALFRELKEEIG).

The protein belongs to the Nudix hydrolase family. RppH subfamily. Requires a divalent metal cation as cofactor.

Its function is as follows. Accelerates the degradation of transcripts by removing pyrophosphate from the 5'-end of triphosphorylated RNA, leading to a more labile monophosphorylated state that can stimulate subsequent ribonuclease cleavage. The sequence is that of RNA pyrophosphohydrolase from Campylobacter jejuni subsp. jejuni serotype O:2 (strain ATCC 700819 / NCTC 11168).